The sequence spans 566 residues: MLNAYKHSGKAELKPVISKIIAEIPEIRRHVREVIDIVRETINEVNQLPIEKQKEIIEKNWPELLEEKPRTEEKSLPPLPNAAKGRVVTRFAPNPDYTIHLGNARPALLSYWYAEMYEGKMILRFEDTDPRTKAPFPEAYDRIRNDLKWLGIKWNEEYIQSLRLPILYNALRELIKHGGAYVDKCSPKEFKKLRDSGKPCPHRELPPEKHLEELDRIFEGYYSEGEAVVRVKTDLSHPDPSVRDWVAARIIDTSKTPHPIVGDKYILWPTYNLAAAIDDHLMGVTHILRAKEHVSNTIKQKFLYDHMGWKYPETIHFGRLSLEGVILSKSRMRKMIVEYNMEPYDDPRFGTLSGLRRRGIVRETLWRIIKDVGINVIDARISYVNLAAINRSIIDPQAKRYMAIEEALPLKLIGFNNSIEAHVLRHPSTRETYNYIIKPGDIVYISQKDFNIIQNKMFRLMGIGNFALTRPVFSKNYIGFEARLISLSAKEAKQYRAPIIQWVKLEQSIRVKLIIPKETNLETRILLAEKALTNEELGNIVQFYRIGFARIDSKEPEEIKCIFAHE.

Positions 93–103 (PNPDYTIHLGN) match the 'HIGH' region motif.

The protein belongs to the class-I aminoacyl-tRNA synthetase family. Glutamate--tRNA ligase type 2 subfamily.

The protein resides in the cytoplasm. The enzyme catalyses tRNA(Glu) + L-glutamate + ATP = L-glutamyl-tRNA(Glu) + AMP + diphosphate. Its function is as follows. Catalyzes the attachment of glutamate to tRNA(Glu) in a two-step reaction: glutamate is first activated by ATP to form Glu-AMP and then transferred to the acceptor end of tRNA(Glu). In Staphylothermus marinus (strain ATCC 43588 / DSM 3639 / JCM 9404 / F1), this protein is Glutamate--tRNA ligase.